A 282-amino-acid polypeptide reads, in one-letter code: Protein-glutamine deamidase Cif (282 aa).

Positions 1 to 16 (MKDITLPPPTSASCLT) are translocation domain (TD). Catalysis depends on residues Cys-109, His-165, and Gln-185.

Belongs to the Cif family.

It is found in the secreted. The protein localises to the host nucleus. It carries out the reaction L-glutaminyl-[protein] + H2O = L-glutamyl-[protein] + NH4(+). Protein-glutamine deamidase effector that inhibits the host cell cycle and other key cellular processes such as the actin network and programmed-cell death. Acts by mediating the side chain deamidation of 'Gln-40' of host NEDD8, converting it to glutamate, thereby abolishing the activity of cullin-RING-based E3 ubiquitin-protein ligase complexes (CRL complexes). Inactivation of CRL complexes prevents ubiquitination and subsequent degradation of the cyclin-dependent kinase inhibitors CDKN1A/p21 and CDKN1B/p27, leading to G1 and G2 cell cycle arrests in host cells. Also able to catalyze deamidation of 'Gln-40' of host ubiquitin in vitro; however, NEDD8 constitutes the preferred substrate in vivo. In Escherichia coli, this protein is Protein-glutamine deamidase Cif.